A 111-amino-acid polypeptide reads, in one-letter code: Prothymosin alpha (111 aa).

M1 is modified (N-acetylmethionine). The interval 1-111 (MSDAAVDTSS…TKKQKTDEDD (111 aa)) is disordered. At S2 the chain carries N-acetylserine; in Prothymosin alpha, N-terminally processed. S2 bears the Phosphoserine mark. Position 8 is a phosphothreonine (T8). Phosphoserine occurs at positions 9 and 10. A phosphothreonine mark is found at T13 and T14. Residues 13–31 (TTKDLKEKKEVVEEAENGR) show a composition bias toward basic and acidic residues. K15 carries the N6-acetyllysine; alternate modification. Residue K15 is modified to N6-succinyllysine; alternate. A compositionally biased stretch (acidic residues) spans 40–84 (ENEENGEQEADNEVDEEEEEGGEEEEEEEEGDGEEEDGDEDEEAE). Positions 101–111 (DTKKQKTDEDD) are enriched in basic and acidic residues. Residue T102 is modified to Phosphothreonine. An N6-acetyllysine; alternate modification is found at K103. K103 is covalently cross-linked (Glycyl lysine isopeptide (Lys-Gly) (interchain with G-Cter in SUMO2); alternate). Phosphothreonine is present on T107.

It belongs to the pro/parathymosin family. Interacts with NUPR1; regulates apoptotic process. Post-translationally, covalently linked to a small RNA of about 20 nucleotides.

It localises to the nucleus. Its function is as follows. Prothymosin alpha may mediate immune function by conferring resistance to certain opportunistic infections. This is Prothymosin alpha (PTMA) from Homo sapiens (Human).